The chain runs to 397 residues: L-aspartate--L-methionine ligase (397 aa).

The ATP-grasp domain occupies 131–347 (VALNNKARIP…FFNTILKYVK (217 aa)). The ADP site is built by K136, V171, K173, G183, V186, I188, E215, Q216, I218, N223, and T246. D288 serves as a coordination point for Mg(2+). ADP is bound by residues L290 and I300. D301 contacts Mg(2+). R305 functions as the Critical for catalysis in the catalytic mechanism.

As to quaternary structure, primarily a monomer in solution. Minor homodimer formation. It depends on Mg(2+) as a cofactor.

It carries out the reaction L-aspartate + L-methionine + ATP = L-aspartyl-L-methionine + ADP + phosphate + H(+). The protein operates within amino-acid metabolism. Its function is as follows. L-amino acid ligase, which preferentially catalyzes the formation of L-aspartyl-L-methionine dipeptide from L-aspartate and L-methionine in the presence of ATP. Less active with L-asparagine and L-methionine as substrates. Less active with L-aspartate and either L-phenylalanine, L-valine, L-leucine or L-isoleucine as substrates. Decreased activity when L-methionine is substituted with seleno-DL-methionine, L-homocysteine, L-methionine sulfoxide, L-methionine sulfoximine and o-acetyl-L-serine. Decreased activity with acetylation of L-methionine amino group. Decreased activity by modification of L-methionine carboxylate to L-methionine methyl ester. No activity when L-methionine is substituted with L-homoserine. No activity with formylation of L-methionine amino group. No activity by modification of L-methionine carboxylate to L-methionine-glycine carboxylate. No activity when L-aspartate substrate is replaced by analogs such as L-homoserine, DL-aspartate beta-methyl ester, L-glutamate or o-acetyl-L-serine. No activity when L-aspartate amino and alpha-carboxylate groups are modified to L-malate, glycine-L-aspartate, L-aspartate-glycine or N-carbamoyl-DL-aspartate. No activity with L-methionine or L-aspartate as sole substrates. No activity in presence of other nucleoside triphosphates including GTP, CTP, UTP, TTP or ITP. Involved in sulfur amino acid metabolism. This Staphylococcus aureus (strain NCTC 8325 / PS 47) protein is L-aspartate--L-methionine ligase.